The sequence spans 113 residues: Histidine triad nucleotide-binding protein (113 aa).

Residues cysteine 5 and cysteine 8 each contribute to the Zn(2+) site. The region spanning 6–113 (IFCKIAQKQI…GGKKLAWDKL (108 aa)) is the HIT domain. Aspartate 31 serves as a coordination point for AMP. Residue histidine 47 participates in Zn(2+) binding. AMP-binding residues include asparagine 86, glycine 92, and threonine 94. Histidine 97 provides a ligand contact to Zn(2+). The Histidine triad motif motif lies at 97–101 (HIHFH). AMP is bound by residues histidine 99 and histidine 101. The active-site Tele-AMP-histidine intermediate is histidine 99.

It belongs to the HINT family.

Its subcellular location is the nucleus. It is found in the cytoplasm. It catalyses the reaction adenosine 5'-phosphoramidate + H2O = AMP + NH4(+). Hydrolyzes purine nucleotide phosphoramidates with a single phosphate group, including adenosine 5'monophosphoramidate (AMP-NH2), adenosine 5'monophosphomorpholidate (AMP-morpholidate) and guanosine 5'monophosphomorpholidate (GMP-morpholidate). Hydrolyzes lysyl-AMP (AMP-N-epsilon-(N-alpha-acetyl lysine methyl ester)) generated by lysine tRNA ligase, as well as Met-AMP, His-AMP and Asp-AMP, lysyl-GMP (GMP-N-epsilon-(N-alpha-acetyl lysine methyl ester)) and AMP-N-alanine methyl ester. May also function as scaffolding protein that mediates protein-protein interactions. This is Histidine triad nucleotide-binding protein from Entamoeba histolytica (strain ATCC 30459 / HM-1:IMSS / ABRM).